Here is a 289-residue protein sequence, read N- to C-terminus: Phosphatidylserine decarboxylase proenzyme (289 aa).

Residues Asp89, His146, and Ser252 each act as charge relay system; for autoendoproteolytic cleavage activity in the active site. Catalysis depends on Ser252, which acts as the Schiff-base intermediate with substrate; via pyruvic acid; for decarboxylase activity. Pyruvic acid (Ser); by autocatalysis is present on Ser252.

The protein belongs to the phosphatidylserine decarboxylase family. PSD-B subfamily. Prokaryotic type I sub-subfamily. As to quaternary structure, heterodimer of a large membrane-associated beta subunit and a small pyruvoyl-containing alpha subunit. The cofactor is pyruvate. Is synthesized initially as an inactive proenzyme. Formation of the active enzyme involves a self-maturation process in which the active site pyruvoyl group is generated from an internal serine residue via an autocatalytic post-translational modification. Two non-identical subunits are generated from the proenzyme in this reaction, and the pyruvate is formed at the N-terminus of the alpha chain, which is derived from the carboxyl end of the proenzyme. The autoendoproteolytic cleavage occurs by a canonical serine protease mechanism, in which the side chain hydroxyl group of the serine supplies its oxygen atom to form the C-terminus of the beta chain, while the remainder of the serine residue undergoes an oxidative deamination to produce ammonia and the pyruvoyl prosthetic group on the alpha chain. During this reaction, the Ser that is part of the protease active site of the proenzyme becomes the pyruvoyl prosthetic group, which constitutes an essential element of the active site of the mature decarboxylase.

The protein localises to the cell membrane. It catalyses the reaction a 1,2-diacyl-sn-glycero-3-phospho-L-serine + H(+) = a 1,2-diacyl-sn-glycero-3-phosphoethanolamine + CO2. Its pathway is phospholipid metabolism; phosphatidylethanolamine biosynthesis; phosphatidylethanolamine from CDP-diacylglycerol: step 2/2. Catalyzes the formation of phosphatidylethanolamine (PtdEtn) from phosphatidylserine (PtdSer). The protein is Phosphatidylserine decarboxylase proenzyme of Shewanella denitrificans (strain OS217 / ATCC BAA-1090 / DSM 15013).